A 118-amino-acid polypeptide reads, in one-letter code: Large ribosomal subunit protein uL18 (118 aa).

Belongs to the universal ribosomal protein uL18 family. As to quaternary structure, part of the 50S ribosomal subunit; part of the 5S rRNA/L5/L18/L25 subcomplex. Contacts the 5S and 23S rRNAs.

This is one of the proteins that bind and probably mediate the attachment of the 5S RNA into the large ribosomal subunit, where it forms part of the central protuberance. The chain is Large ribosomal subunit protein uL18 from Parvibaculum lavamentivorans (strain DS-1 / DSM 13023 / NCIMB 13966).